The following is a 206-amino-acid chain: Ribosomal RNA small subunit methyltransferase G (206 aa).

Residues glycine 73, leucine 78, 124–125 (VE), and arginine 139 each bind S-adenosyl-L-methionine.

Belongs to the methyltransferase superfamily. RNA methyltransferase RsmG family.

The protein localises to the cytoplasm. It catalyses the reaction guanosine(527) in 16S rRNA + S-adenosyl-L-methionine = N(7)-methylguanosine(527) in 16S rRNA + S-adenosyl-L-homocysteine. Specifically methylates the N7 position of guanine in position 527 of 16S rRNA. In Photorhabdus laumondii subsp. laumondii (strain DSM 15139 / CIP 105565 / TT01) (Photorhabdus luminescens subsp. laumondii), this protein is Ribosomal RNA small subunit methyltransferase G.